The sequence spans 402 residues: Glutamate N-acetyltransferase (402 aa).

Substrate-binding residues include threonine 146, lysine 172, threonine 185, glutamate 267, asparagine 397, and threonine 402. The active-site Nucleophile is threonine 185.

It belongs to the ArgJ family. As to quaternary structure, heterotetramer of two alpha and two beta chains.

Its subcellular location is the cytoplasm. It catalyses the reaction N(2)-acetyl-L-ornithine + L-glutamate = N-acetyl-L-glutamate + L-ornithine. The protein operates within amino-acid biosynthesis; L-arginine biosynthesis; L-ornithine and N-acetyl-L-glutamate from L-glutamate and N(2)-acetyl-L-ornithine (cyclic): step 1/1. Competitively inhibited by L-ornithine. In terms of biological role, catalyzes the transfer of the acetyl group from N(2)-acetylornithine to glutamate, forming N-acetylglutamate and L-ornithine. This Methanocaldococcus jannaschii (strain ATCC 43067 / DSM 2661 / JAL-1 / JCM 10045 / NBRC 100440) (Methanococcus jannaschii) protein is Glutamate N-acetyltransferase.